Reading from the N-terminus, the 210-residue chain is Ribosomal RNA small subunit methyltransferase G (210 aa).

S-adenosyl-L-methionine contacts are provided by residues G76, L81, 127–128 (VE), and R142.

The protein belongs to the methyltransferase superfamily. RNA methyltransferase RsmG family.

The protein resides in the cytoplasm. It carries out the reaction guanosine(527) in 16S rRNA + S-adenosyl-L-methionine = N(7)-methylguanosine(527) in 16S rRNA + S-adenosyl-L-homocysteine. Its function is as follows. Specifically methylates the N7 position of guanine in position 527 of 16S rRNA. The chain is Ribosomal RNA small subunit methyltransferase G from Aliivibrio fischeri (strain ATCC 700601 / ES114) (Vibrio fischeri).